We begin with the raw amino-acid sequence, 532 residues long: Egg peptide speract receptor (532 aa).

An N-terminal signal peptide occupies residues M1–A30. Residues E31–P491 lie on the Extracellular side of the membrane. 4 consecutive SRCR domains span residues I43–L144, L153–K257, I264–A366, and V382–E485. 12 disulfides stabilise this stretch: C68–C133, C81–C143, C112–C122, C178–C244, C191–C256, C223–C233, C289–C355, C302–C365, C335–C345, C406–C475, C419–C484, and C454–C465. Residues N78 and N115 are each glycosylated (N-linked (GlcNAc...) asparagine). N-linked (GlcNAc...) asparagine glycosylation occurs at N459. The helical transmembrane segment at S492 to I520 threads the bilayer. Topologically, residues K521 to A532 are cytoplasmic.

It is found in the membrane. Receptor for the egg peptide speract. This chain is Egg peptide speract receptor, found in Strongylocentrotus purpuratus (Purple sea urchin).